The following is a 528-amino-acid chain: GMP synthase [glutamine-hydrolyzing] (528 aa).

Residues 13–204 (SILILDFGSQ…VYKISCCTAD (192 aa)) enclose the Glutamine amidotransferase type-1 domain. Catalysis depends on Cys90, which acts as the Nucleophile. Catalysis depends on residues His178 and Glu180. One can recognise a GMPS ATP-PPase domain in the interval 205-403 (WTTETYIEET…LGLPDEIIKR (199 aa)). 232–238 (SGGVDSS) contributes to the ATP binding site.

In terms of assembly, homodimer.

It carries out the reaction XMP + L-glutamine + ATP + H2O = GMP + L-glutamate + AMP + diphosphate + 2 H(+). It participates in purine metabolism; GMP biosynthesis; GMP from XMP (L-Gln route): step 1/1. Catalyzes the synthesis of GMP from XMP. This Prochlorococcus marinus (strain AS9601) protein is GMP synthase [glutamine-hydrolyzing].